Here is a 379-residue protein sequence, read N- to C-terminus: Putative glutamate--cysteine ligase 2 (379 aa).

The protein belongs to the glutamate--cysteine ligase type 2 family. YbdK subfamily.

It carries out the reaction L-cysteine + L-glutamate + ATP = gamma-L-glutamyl-L-cysteine + ADP + phosphate + H(+). Its function is as follows. ATP-dependent carboxylate-amine ligase which exhibits weak glutamate--cysteine ligase activity. This chain is Putative glutamate--cysteine ligase 2, found in Roseiflexus castenholzii (strain DSM 13941 / HLO8).